The sequence spans 200 residues: Signal peptidase complex catalytic subunit SEC11 (200 aa).

Over 1–15 (MFAELAPYLSNPRQT) the chain is Cytoplasmic. A helical; Signal-anchor for type II membrane protein transmembrane segment spans residues 16–33 (LAQILNFALVLSTAFMGW). The Lumenal portion of the chain corresponds to 34–200 (KALSVYTNSS…MGVMVMLQRE (167 aa)). An N-linked (GlcNAc...) asparagine glycan is attached at Asn-41. Active-site charge relay system residues include Ser-53 and His-92. Residues 101 to 131 (GDGGKKSQRRLEKEADKRSGPGLSSPISHQM) form a disordered region. A compositionally biased stretch (basic and acidic residues) spans 103–119 (GGKKSQRRLEKEADKRS). Residue Asp-142 is the Charge relay system of the active site. Residues 186-197 (VLLGIMGVMVML) form a C-terminal short (CTS) helix region.

Belongs to the peptidase S26B family. Component of the signal peptidase complex (SPC) composed of a catalytic subunit SEC11 and three accessory subunits SPC1, SPC2 and SPC3. The complex induces a local thinning of the ER membrane which is used to measure the length of the signal peptide (SP) h-region of protein substrates. This ensures the selectivity of the complex towards h-regions shorter than 18-20 amino acids. SPC associates with the translocon complex.

Its subcellular location is the endoplasmic reticulum membrane. It carries out the reaction Cleavage of hydrophobic, N-terminal signal or leader sequences from secreted and periplasmic proteins.. Its function is as follows. Catalytic component of the signal peptidase complex (SPC) which catalyzes the cleavage of N-terminal signal sequences from nascent proteins as they are translocated into the lumen of the endoplasmic reticulum. Specifically cleaves N-terminal signal peptides that contain a hydrophobic alpha-helix (h-region) shorter than 18-20 amino acids. The polypeptide is Signal peptidase complex catalytic subunit SEC11 (SEC11) (Arthroderma gypseum (strain ATCC MYA-4604 / CBS 118893) (Microsporum gypseum)).